A 377-amino-acid chain; its full sequence is Endolytic peptidoglycan transglycosylase RlpA (377 aa).

The signal sequence occupies residues 1–19 (MHKQLPVICVAAGIVLLAA). Cys-20 carries the N-palmitoyl cysteine lipid modification. Cys-20 carries the S-diacylglycerol cysteine lipid modification. The interval 196-277 (LPPRPDLSGG…PVSAPVTAPA (82 aa)) is disordered. Low complexity-rich tracts occupy residues 208–218 (SASSAPAQPQG) and 264–277 (PQTA…TAPA). Positions 300–376 (AAASGRFVVQ…AQLQSFIASA (77 aa)) constitute an SPOR domain.

Belongs to the RlpA family.

The protein localises to the cell membrane. Lytic transglycosylase with a strong preference for naked glycan strands that lack stem peptides. In Salmonella typhi, this protein is Endolytic peptidoglycan transglycosylase RlpA.